The following is a 566-amino-acid chain: Bicarbonate transporter BicA (566 aa).

Residues 1–15 lie on the Cytoplasmic side of the membrane; it reads MQITNKIHFRNIRGD. Residues 16-36 traverse the membrane as a helical segment; sequence IFGGLTAAVIALPMALAFGVA. The Periplasmic segment spans residues 37–42; sequence SGAGAE. The chain crosses the membrane as a helical span at residues 43–63; that stretch reads AGLWGAVLVGFFAALFGGTPT. Residue leucine 64 is a topological domain, cytoplasmic. A helical membrane pass occupies residues 65–85; the sequence is ISEPTGPMTVVMTAVIAHFTA. A hydrogencarbonate-binding site is contributed by threonine 69. The Periplasmic segment spans residues 86 to 93; the sequence is SAATPEEG. Residues 94-114 form a helical membrane-spanning segment; sequence LAIAFTVVMMAGVFQIIFGSL. Residues 115 to 126 are Cytoplasmic-facing; that stretch reads KLGKYVTMMPYT. A helical membrane pass occupies residues 127–147; it reads VISGFMSGIGIILVILQLAPF. Residues 148 to 169 are Periplasmic-facing; that stretch reads LGQASPGGGVIGTLQNLPTLLS. A helical transmembrane segment spans residues 170–190; it reads NIQPGETALALGTVAIIWFMP. Over 191–196 the chain is Cytoplasmic; that stretch reads EKFKKV. A helical membrane pass occupies residues 197–217; that stretch reads IPPQLVALVLGTVIAFFVFPP. Topologically, residues 218–247 are periplasmic; that stretch reads EVSDLRRIGEIRAGFPELVRPSFSPVEFQR. The helical transmembrane segment at 248–268 threads the bilayer; the sequence is MILDAAVLGMLGCIDALLTSV. Na(+) is bound by residues aspartate 262, threonine 266, and glycine 304. The Cytoplasmic segment spans residues 269 to 318; sequence VADSLTRTEHNSNKELIGQGLGNLFSGLFGGIAGAGATMGTVVNIQSGGR. Alanine 305 provides a ligand contact to hydrogencarbonate. Residue threonine 306 participates in Na(+) binding. A helical transmembrane segment spans residues 319–339; it reads TALSGLVRAFVLLVVILGAAS. Position 340 (leucine 340) is a topological domain, periplasmic. Residues 341–361 form a helical membrane-spanning segment; that stretch reads TATIPLAVLAGIAFKVGVDII. Topologically, residues 362–371 are cytoplasmic; sequence DWSFLKRAHE. Residues 372–392 traverse the membrane as a helical segment; it reads ISPKGALIMYGVILLTVLVDL. Isoleucine 393 is a topological domain (periplasmic). A helical membrane pass occupies residues 394–414; it reads VAVGVGVFVANVLTIERMSNL. The Cytoplasmic segment spans residues 415–566; sequence QSEKVQTVSD…GVTAPSSEMG (152 aa). Residues 436–546 form the STAS domain; that stretch reads KRWLDEGQGR…MSREEALKNA (111 aa).

The protein belongs to the SLC26A/SulP transporter (TC 2.A.53) family.

Its subcellular location is the cell inner membrane. In terms of biological role, low/medium affinity, Na(+)-dependent bicarbonate transporter. The protein is Bicarbonate transporter BicA (bicA) of Picosynechococcus sp. (strain ATCC 27264 / PCC 7002 / PR-6) (Agmenellum quadruplicatum).